The primary structure comprises 263 residues: Ubiquinone/menaquinone biosynthesis C-methyltransferase UbiE (263 aa).

Thr-86, Asp-107, and Ser-152 together coordinate S-adenosyl-L-methionine.

Belongs to the class I-like SAM-binding methyltransferase superfamily. MenG/UbiE family.

The catalysed reaction is a 2-demethylmenaquinol + S-adenosyl-L-methionine = a menaquinol + S-adenosyl-L-homocysteine + H(+). The enzyme catalyses a 2-methoxy-6-(all-trans-polyprenyl)benzene-1,4-diol + S-adenosyl-L-methionine = a 5-methoxy-2-methyl-3-(all-trans-polyprenyl)benzene-1,4-diol + S-adenosyl-L-homocysteine + H(+). It participates in quinol/quinone metabolism; menaquinone biosynthesis; menaquinol from 1,4-dihydroxy-2-naphthoate: step 2/2. Its pathway is cofactor biosynthesis; ubiquinone biosynthesis. Functionally, methyltransferase required for the conversion of demethylmenaquinol (DMKH2) to menaquinol (MKH2) and the conversion of 2-polyprenyl-6-methoxy-1,4-benzoquinol (DDMQH2) to 2-polyprenyl-3-methyl-6-methoxy-1,4-benzoquinol (DMQH2). The sequence is that of Ubiquinone/menaquinone biosynthesis C-methyltransferase UbiE from Brucella anthropi (strain ATCC 49188 / DSM 6882 / CCUG 24695 / JCM 21032 / LMG 3331 / NBRC 15819 / NCTC 12168 / Alc 37) (Ochrobactrum anthropi).